The sequence spans 1607 residues: Phosphatidylinositol 3-kinase piki-1 (1607 aa).

Positions 2 to 21 constitute a UIM domain; sequence SDDEELQLAIEISKKTFKDE. Disordered stretches follow at residues 54-91, 105-128, and 142-182; these read EANS…HSQS, STSQ…KFPP, and PPPP…SFAS. Over residues 58 to 69 the composition is skewed to polar residues; sequence PGPSSYSGSLAT. A compositionally biased stretch (pro residues) spans 158-169; the sequence is PPVPIHPTPPVS. Residues 362–453 form the PI3K-RBD domain; sequence ASTVKVVVYK…GDDVKLDLGV (92 aa). Residues 598-766 form the C2 PI3K-type domain; the sequence is KMDFLQIMLN…KIWDTEIYFP (169 aa). The 178-residue stretch at 776–953 folds into the PIK helical domain; that stretch reads PQDFATLDIE…AIRCQNLQQK (178 aa). The PI3K/PI4K catalytic domain maps to 1029–1303; that stretch reads RIEECSVFNS…MIQNSLGSAF (275 aa). Residues 1035–1041 form a G-loop region; it reads VFNSNAK. The segment at 1168 to 1176 is catalytic loop; it reads GIGDRHNDN. The interval 1187 to 1213 is activation loop; the sequence is HIDFGKYMGDWQMAAGFRRDRVPFVFT. A PX domain is found at 1344-1458; sequence GRISRVTVLK…TFFHSILRDN (115 aa). A C2 domain is found at 1472 to 1601; sequence SQCQIYLKIE…KNCRTLEGWF (130 aa).

It belongs to the PI3/PI4-kinase family.

It is found in the cell projection. It localises to the phagocytic cup. The protein localises to the cytoplasmic vesicle. The protein resides in the phagosome membrane. Its subcellular location is the cytoplasm. The enzyme catalyses a 1,2-diacyl-sn-glycero-3-phospho-(1D-myo-inositol) + ATP = a 1,2-diacyl-sn-glycero-3-phospho-(1D-myo-inositol-3-phosphate) + ADP + H(+). Phosphatidylinositol 3-kinase involved in clearance of apoptotic cell corpses by phagosomes. Phagosome maturation requires two sequential and non-overlapping pulses of phosphatidylinositol-3-phosphate (PI3P) on the vesicle surface which mediates recruitment of sortins snx-1 and lst-4 and small GTPases rab-5, rab-2 and rab-7. The first pulse is initiated by piki-1, then maintained by vps-34 which also produces the second pulse. Unlike vps-34, not involved in the formation of PI3P in early endosomes. The sequence is that of Phosphatidylinositol 3-kinase piki-1 from Caenorhabditis elegans.